Reading from the N-terminus, the 903-residue chain is Protein translocase subunit SecA (903 aa).

ATP-binding positions include Q89, 107-111 (GEGKT), and D502. The Zn(2+) site is built by C886, C888, C897, and H898.

This sequence belongs to the SecA family. In terms of assembly, monomer and homodimer. Part of the essential Sec protein translocation apparatus which comprises SecA, SecYEG and auxiliary proteins SecDF-YajC and YidC. The cofactor is Zn(2+).

The protein localises to the cell inner membrane. It is found in the cytoplasm. The catalysed reaction is ATP + H2O + cellular proteinSide 1 = ADP + phosphate + cellular proteinSide 2.. Part of the Sec protein translocase complex. Interacts with the SecYEG preprotein conducting channel. Has a central role in coupling the hydrolysis of ATP to the transfer of proteins into and across the cell membrane, serving both as a receptor for the preprotein-SecB complex and as an ATP-driven molecular motor driving the stepwise translocation of polypeptide chains across the membrane. This is Protein translocase subunit SecA from Sinorhizobium medicae (strain WSM419) (Ensifer medicae).